We begin with the raw amino-acid sequence, 397 residues long: Lysophospholipid transporter LplT (397 aa).

The Periplasmic segment spans residues 1–17; sequence MSESVHTNTSLWSKGMK. Residues 18-38 traverse the membrane as a helical segment; it reads AVIVAQFLSAFGDNALLFATL. At 39 to 52 the chain is on the cytoplasmic side; that stretch reads ALLKAQFYPEWSQP. Residues 53–73 traverse the membrane as a helical segment; that stretch reads ILQMVFVGAYILFAPFVGQVA. At 74 to 90 the chain is on the periplasmic side; it reads DSFAKGRVMMFANGLKL. Residues 91 to 111 form a helical membrane-spanning segment; that stretch reads LGAASICFGINPFLGYTLVGV. The Cytoplasmic portion of the chain corresponds to 112–144; the sequence is GAAAYSPAKYGILGELTTGSKLVKANGLMEAST. A helical transmembrane segment spans residues 145 to 165; sequence IAAILLGSVAGGVLADWHILV. Position 166 (Ala166) is a topological domain, periplasmic. The helical transmembrane segment at 167–187 threads the bilayer; it reads LVACALAYGGAVVANIYIPKL. The Cytoplasmic portion of the chain corresponds to 188-226; sequence AAARPGQSWNLISMTRSFLNACTSLWRNGETRFSLVGTS. Residues 227 to 247 traverse the membrane as a helical segment; it reads LFWGAGVTLRFLLVLWVPVAL. Over 248–256 the chain is Periplasmic; the sequence is GITDNATPT. The helical transmembrane segment at 257-277 threads the bilayer; that stretch reads YLNAMVAIGIVVGAGAAAKLV. The Cytoplasmic portion of the chain corresponds to 278 to 280; sequence TLE. A helical membrane pass occupies residues 281-301; the sequence is TVSRCMPAGILIGVVVLIFSL. The Periplasmic portion of the chain corresponds to 302–304; it reads QHE. The chain crosses the membrane as a helical span at residues 305 to 325; sequence LLPAYALLMLIGVLGGFFVVP. Topologically, residues 326–343 are cytoplasmic; that stretch reads LNALLQERGKKSVGAGNA. The chain crosses the membrane as a helical span at residues 344–364; the sequence is IAVQNLGENSAMLLMLGIYSL. Residues 365-366 lie on the Periplasmic side of the membrane; it reads AV. Residues 367–387 traverse the membrane as a helical segment; the sequence is MVGIPVVPIGIGFGALFALAI. Residues 388 to 397 lie on the Cytoplasmic side of the membrane; sequence TALWIWQRRH.

Belongs to the major facilitator superfamily. LplT (TC 2.A.1.42) family.

The protein resides in the cell inner membrane. Functionally, catalyzes the facilitated diffusion of 2-acyl-glycero-3-phosphoethanolamine (2-acyl-GPE) into the cell. The polypeptide is Lysophospholipid transporter LplT (Escherichia coli O81 (strain ED1a)).